Reading from the N-terminus, the 238-residue chain is Ribonuclease PH (238 aa).

Residues Arg-86 and 124 to 126 (GTR) contribute to the phosphate site.

It belongs to the RNase PH family. In terms of assembly, homohexameric ring arranged as a trimer of dimers.

It carries out the reaction tRNA(n+1) + phosphate = tRNA(n) + a ribonucleoside 5'-diphosphate. In terms of biological role, phosphorolytic 3'-5' exoribonuclease that plays an important role in tRNA 3'-end maturation. Removes nucleotide residues following the 3'-CCA terminus of tRNAs; can also add nucleotides to the ends of RNA molecules by using nucleoside diphosphates as substrates, but this may not be physiologically important. Probably plays a role in initiation of 16S rRNA degradation (leading to ribosome degradation) during starvation. This is Ribonuclease PH from Brucella anthropi (strain ATCC 49188 / DSM 6882 / CCUG 24695 / JCM 21032 / LMG 3331 / NBRC 15819 / NCTC 12168 / Alc 37) (Ochrobactrum anthropi).